A 326-amino-acid chain; its full sequence is Aquaporin-4 (326 aa).

Residues 1 to 39 are Cytoplasmic-facing; it reads MSDGAGAAARRWGKCGGRSCSRESIMVAFKGVWTQAFWK. S-palmitoyl cysteine attachment occurs at residues Cys-15 and Cys-20. The helical transmembrane segment at 40-60 threads the bilayer; the sequence is AVTAEFLAMLIFVLLSVGSTI. Residues 61–72 are Extracellular-facing; that stretch reads NWGGSENPLPVD. The chain crosses the membrane as a helical span at residues 73-92; it reads MVLISLCFGLSIATMVQCFG. Topologically, residues 93–96 are cytoplasmic; it reads HISG. Residues 97–104 constitute an intramembrane region (discontinuously helical); that stretch reads GHINPAVT. The NPA 1 signature appears at 100 to 102; the sequence is NPA. Residues 105–118 lie on the Cytoplasmic side of the membrane; it reads VAMVCTRKISIAKS. Position 114 is a phosphoserine; by PKG (Ser-114). A helical membrane pass occupies residues 119 to 139; it reads VFYITAQCLGAIIGAGILYLV. Residues 140-158 lie on the Extracellular side of the membrane; that stretch reads TPPNVVGGLGVTTVHGNLT. N-linked (GlcNAc...) asparagine glycosylation occurs at Asn-156. A helical membrane pass occupies residues 159-179; the sequence is AGHGLLVELIITFQLVFTIFA. Residues 180–187 are Cytoplasmic-facing; it reads SCDSKRTD. Phosphoserine; by PKC is present on Ser-183. The chain crosses the membrane as a helical span at residues 188–208; sequence VTGSIALAIGFSVAIGHLFAI. Residue Asn-209 is glycosylated (N-linked (GlcNAc...) asparagine). Over 209–211 the chain is Extracellular; sequence NYT. The discontinuously helical intramembrane region spans 212–225; sequence GASMNPARSFGPAV. The NPA 2 motif lies at 216–218; that stretch reads NPA. Residues 226–234 lie on the Extracellular side of the membrane; that stretch reads IMGNWENHW. A helical membrane pass occupies residues 235 to 255; it reads IYWVGPIIGAVLAGALYEYVF. Over 256–326 the chain is Cytoplasmic; that stretch reads CPDVELKRRL…DSAGEVLSSV (71 aa). A phosphoserine mark is found at Ser-279 and Ser-288. At Thr-292 the chain carries Phosphothreonine. Phosphoserine is present on Ser-324.

The protein belongs to the MIP/aquaporin (TC 1.A.8) family. As to quaternary structure, homotetramer. The tetramers can form oligomeric arrays in membranes. The size of the oligomers differs between tissues and is smaller in skeletal muscle than in brain. Interaction between AQP4 oligomeric arrays in close-by cells can contribute to cell-cell adhesion. Part of a complex containing MLC1, TRPV4, HEPACAM and ATP1B1. Post-translationally, phosphorylation by PKC at Ser-183 reduces conductance by 50%. Phosphorylation by PKG at Ser-114 in response to glutamate increases conductance by 40%. In terms of processing, isoform Long: Palmitoylated on its N-terminal region.

The protein resides in the cell membrane. The protein localises to the basolateral cell membrane. Its subcellular location is the endosome membrane. It localises to the sarcolemma. It is found in the cell projection. It carries out the reaction H2O(in) = H2O(out). Its function is as follows. Forms a water-specific channel. Plays an important role in brain water homeostasis and in glymphatic solute transport. Required for a normal rate of water exchange across the blood brain interface. Required for normal levels of cerebrospinal fluid influx into the brain cortex and parenchyma along paravascular spaces that surround penetrating arteries, and for normal drainage of interstitial fluid along paravenous drainage pathways. Thereby, it is required for normal clearance of solutes from the brain interstitial fluid, including soluble beta-amyloid peptides derived from APP. Plays a redundant role in urinary water homeostasis and urinary concentrating ability. The polypeptide is Aquaporin-4 (AQP4) (Notomys alexis (Spinifex hopping mouse)).